The primary structure comprises 191 residues: Penicillin-binding protein activator LpoB (191 aa).

Positions 1-16 (MKRYLSLALAALVLTG) are cleaved as a signal peptide. A lipid anchor (N-palmitoyl cysteine) is attached at C17. A lipid anchor (S-diacylglycerol cysteine) is attached at C17.

The protein belongs to the LpoB family. Interacts with PBP1b.

Its subcellular location is the cell outer membrane. Its function is as follows. Regulator of peptidoglycan synthesis that is essential for the function of penicillin-binding protein 1B (PBP1b). The polypeptide is Penicillin-binding protein activator LpoB (Yersinia pestis (strain D182038)).